The chain runs to 211 residues: FMN-dependent NADH:quinone oxidoreductase 2 (211 aa).

FMN is bound by residues S10 and S17–S19.

This sequence belongs to the azoreductase type 1 family. In terms of assembly, homodimer. Requires FMN as cofactor.

The catalysed reaction is 2 a quinone + NADH + H(+) = 2 a 1,4-benzosemiquinone + NAD(+). It carries out the reaction N,N-dimethyl-1,4-phenylenediamine + anthranilate + 2 NAD(+) = 2-(4-dimethylaminophenyl)diazenylbenzoate + 2 NADH + 2 H(+). Quinone reductase that provides resistance to thiol-specific stress caused by electrophilic quinones. In terms of biological role, also exhibits azoreductase activity. Catalyzes the reductive cleavage of the azo bond in aromatic azo compounds to the corresponding amines. The polypeptide is FMN-dependent NADH:quinone oxidoreductase 2 (Listeria innocua serovar 6a (strain ATCC BAA-680 / CLIP 11262)).